Here is an 85-residue protein sequence, read N- to C-terminus: U4-theraphotoxin-Hhn1ad (85 aa).

The signal sequence occupies residues 1-22 (MKVTLIAILTCAAVLVLHTTAA). Positions 23-48 (EELKTESQLMEVGMPDTELATVDEER) are excised as a propeptide. 3 cysteine pairs are disulfide-bonded: Cys-52/Cys-66, Cys-56/Cys-77, and Cys-71/Cys-82.

The protein belongs to the neurotoxin 12 (Hwtx-2) family. 02 (Hwtx-2) subfamily. In terms of tissue distribution, expressed by the venom gland.

It is found in the secreted. Postsynaptic neurotoxin. In Cyriopagopus hainanus (Chinese bird spider), this protein is U4-theraphotoxin-Hhn1ad.